Consider the following 398-residue polypeptide: Cysteine protease ATG4A (398 aa).

The active-site Nucleophile is the Cys77. Active-site residues include Asp279 and His281. The short motif at 393-396 (FEIL) is the LIR element.

This sequence belongs to the peptidase C54 family. As to quaternary structure, interacts with ATG9A; the interaction is direct.

The protein localises to the cytoplasm. The catalysed reaction is [protein]-C-terminal L-amino acid-glycyl-phosphatidylethanolamide + H2O = [protein]-C-terminal L-amino acid-glycine + a 1,2-diacyl-sn-glycero-3-phosphoethanolamine. Inhibited by N-ethylmaleimide. Redox-regulated during autophagy since reducing conditions activate ATG4A whereas an oxidizing environment such as the presence of H(2)O(2) inhibits its activity. In terms of biological role, cysteine protease that plays a key role in autophagy by mediating both proteolytic activation and delipidation of ATG8 family proteins. The protease activity is required for proteolytic activation of ATG8 family proteins: cleaves the C-terminal amino acid of ATG8 proteins to reveal a C-terminal glycine. Exposure of the glycine at the C-terminus is essential for ATG8 proteins conjugation to phosphatidylethanolamine (PE) and insertion to membranes, which is necessary for autophagy. Preferred substrate is GABARAPL2 followed by MAP1LC3A and GABARAP. Protease activity is also required to counteract formation of high-molecular weight conjugates of ATG8 proteins (ATG8ylation): acts as a deubiquitinating-like enzyme that removes ATG8 conjugated to other proteins, such as ATG3. In addition to the protease activity, also mediates delipidation of ATG8 family proteins. Catalyzes delipidation of PE-conjugated forms of ATG8 proteins during macroautophagy. Compared to ATG4B, the major protein for proteolytic activation of ATG8 proteins, shows weaker ability to cleave the C-terminal amino acid of ATG8 proteins, while it displays stronger delipidation activity. Involved in phagophore growth during mitophagy independently of its protease activity and of ATG8 proteins: acts by regulating ATG9A trafficking to mitochondria and promoting phagophore-endoplasmic reticulum contacts during the lipid transfer phase of mitophagy. Functionally, (Microbial infection) Mediates cleavage of an ATG8 protein homolog coded in the genome of cytopathogenic bovine viral diarrhea virus (BVDV). The chain is Cysteine protease ATG4A from Bos taurus (Bovine).